The chain runs to 396 residues: Elongation factor Tu (396 aa).

The tr-type G domain occupies 10-206 (KPHVNVGTIG…ALDDYIPEPE (197 aa)). The segment at 19 to 26 (GHVDHGKT) is G1. 19–26 (GHVDHGKT) serves as a coordination point for GTP. A Mg(2+)-binding site is contributed by Thr26. The G2 stretch occupies residues 60 to 64 (GITIA). A G3 region spans residues 81-84 (DCPG). Residues 81 to 85 (DCPGH) and 136 to 139 (NKAD) each bind GTP. Residues 136 to 139 (NKAD) are G4. The G5 stretch occupies residues 174 to 176 (SAL).

It belongs to the TRAFAC class translation factor GTPase superfamily. Classic translation factor GTPase family. EF-Tu/EF-1A subfamily. In terms of assembly, monomer.

The protein localises to the cytoplasm. The enzyme catalyses GTP + H2O = GDP + phosphate + H(+). Functionally, GTP hydrolase that promotes the GTP-dependent binding of aminoacyl-tRNA to the A-site of ribosomes during protein biosynthesis. The chain is Elongation factor Tu from Methylococcus capsulatus (strain ATCC 33009 / NCIMB 11132 / Bath).